Here is a 160-residue protein sequence, read N- to C-terminus: Phosphopantetheine adenylyltransferase (160 aa).

Residue Thr10 coordinates substrate. ATP is bound by residues 10 to 11 and His18; that span reads TF. Lys42, Leu74, and Arg88 together coordinate substrate. ATP-binding positions include 89-91, Glu99, and 124-130; these read GLR and NSFISST.

This sequence belongs to the bacterial CoaD family. Homohexamer. Mg(2+) serves as cofactor.

The protein resides in the cytoplasm. The catalysed reaction is (R)-4'-phosphopantetheine + ATP + H(+) = 3'-dephospho-CoA + diphosphate. It functions in the pathway cofactor biosynthesis; coenzyme A biosynthesis; CoA from (R)-pantothenate: step 4/5. Functionally, reversibly transfers an adenylyl group from ATP to 4'-phosphopantetheine, yielding dephospho-CoA (dPCoA) and pyrophosphate. The sequence is that of Phosphopantetheine adenylyltransferase from Photobacterium damsela subsp. piscicida (Pasteurella piscicida).